Consider the following 265-residue polypeptide: Glutamate racemase (265 aa).

Substrate-binding positions include 7–8 and 39–40; these read DS and YG. Catalysis depends on Cys70, which acts as the Proton donor/acceptor. Residue 71 to 72 participates in substrate binding; that stretch reads NT. Cys177 serves as the catalytic Proton donor/acceptor.

Belongs to the aspartate/glutamate racemases family.

The catalysed reaction is L-glutamate = D-glutamate. Its pathway is cell wall biogenesis; peptidoglycan biosynthesis. Provides the (R)-glutamate required for cell wall biosynthesis. The polypeptide is Glutamate racemase (Prochlorococcus marinus (strain NATL1A)).